A 255-amino-acid polypeptide reads, in one-letter code: Type III pantothenate kinase (255 aa).

An ATP-binding site is contributed by 6–13 (DIGNSNIV). Substrate-binding positions include Y100 and 107–110 (GSDR). The active-site Proton acceptor is D109. D129 serves as a coordination point for K(+). T132 serves as a coordination point for ATP. Residue T184 participates in substrate binding.

This sequence belongs to the type III pantothenate kinase family. As to quaternary structure, homodimer. Requires NH4(+) as cofactor. K(+) is required as a cofactor.

It localises to the cytoplasm. The enzyme catalyses (R)-pantothenate + ATP = (R)-4'-phosphopantothenate + ADP + H(+). The protein operates within cofactor biosynthesis; coenzyme A biosynthesis; CoA from (R)-pantothenate: step 1/5. Its function is as follows. Catalyzes the phosphorylation of pantothenate (Pan), the first step in CoA biosynthesis. This chain is Type III pantothenate kinase, found in Brevibacillus brevis (strain 47 / JCM 6285 / NBRC 100599).